Here is a 269-residue protein sequence, read N- to C-terminus: Expansin-B1 (269 aa).

The first 24 residues, 1–24, serve as a signal peptide directing secretion; sequence MGSLANNIMVVGAVLAALVAGGSC. N-linked (GlcNAc...) asparagine glycosylation occurs at N34. The 107-residue stretch at 63-169 folds into the Expansin-like EG45 domain; that stretch reads GGACGIKNVN…RRVRCKYPAG (107 aa). Cystine bridges form between C66–C94, C97–C164, and C102–C108. In terms of domain architecture, Expansin-like CBD spans 183–264; sequence NYLAVLVKYV…NWRPDAVYTS (82 aa).

Belongs to the expansin family. Expansin B subfamily. Expressed in anthers and pollen.

Its subcellular location is the secreted. The protein resides in the cell wall. It localises to the membrane. Functionally, may aid fertilization by loosening the cell wall of the stigma and style, thereby facilitating penetration of the pollen tube. Acts selectively on grass cell walls, which are relatively poor in pectins and xyloglucans and rich in glucuronoarabinoxylans and (1-3),(1-4)-beta-D-glucans, when compared with cell walls of other angiosperms, including other monocots. This Zea mays (Maize) protein is Expansin-B1 (EXPB1).